A 146-amino-acid polypeptide reads, in one-letter code: Probable flagellum biosynthesis repressor protein FlbT 1 (146 aa).

This sequence belongs to the FlbT family.

Has a post-transcriptional repressor function in flagellum biogenesis. Associates with the 5'-UTR of fljK mRNA and promotes its degradation. In Bradyrhizobium diazoefficiens (strain JCM 10833 / BCRC 13528 / IAM 13628 / NBRC 14792 / USDA 110), this protein is Probable flagellum biosynthesis repressor protein FlbT 1.